We begin with the raw amino-acid sequence, 631 residues long: Nucleoside triphosphatase I (631 aa).

The Helicase ATP-binding domain occupies 42-204; the sequence is FLGLDSMHSL…TMLVNLLRPG (163 aa). Residue 55–62 participates in ATP binding; the sequence is HETGVGKT. Positions 141-144 match the DEXH box motif; the sequence is DECH. The 166-residue stretch at 367–532 folds into the Helicase C-terminal domain; it reads KFIDVCLGIL…EFVQLFRVFK (166 aa).

This sequence belongs to the helicase family. NPH I subfamily. In terms of assembly, monomer.

The enzyme catalyses a ribonucleoside 5'-triphosphate + H2O = a ribonucleoside 5'-diphosphate + phosphate + H(+). Serves two roles in transcription; it acts in concert with viral termination factor/capping enzyme to catalyze release of UUUUUNU-containing nascent RNA from the elongation complex, and it acts by itself as a polymerase elongation factor to facilitate readthrough of intrinsic pause sites. The polypeptide is Nucleoside triphosphatase I (NPH1) (Homo sapiens (Human)).